The chain runs to 774 residues: FT-interacting protein 7 (774 aa).

The segment covering 1–17 (MMQRPFRPEEYSLKETS) has biased composition (basic and acidic residues). The tract at residues 1–25 (MMQRPFRPEEYSLKETSPHLGGGAA) is disordered. C2 domains are found at residues 23-143 (GAAG…PQWY), 182-305 (IPGD…SQWY), and 346-472 (YSSD…THAY). Ca(2+) is bound by residues aspartate 56, aspartate 62, aspartate 109, aspartate 111, and aspartate 116. The next 3 helical transmembrane spans lie at 575-595 (IMGV…ICHW), 606-626 (ILFV…FLYL), and 714-734 (ATAL…VTPF).

This sequence belongs to the MCTP family. In terms of assembly, interacts with OSH1. The cofactor is Ca(2+). Expressed in roots, stems, lemma, palea, pistils and ovules. Expressed at low levels in leaves.

It is found in the cell membrane. Promotes nuclear translocation of the transcription factor OSH1, which directly suppresses the auxin biosynthetic gene YUCCA4 during the late development of anthers. Reduction of auxin levels at late stage of anther development, after meiosis of microspore mother cells, is necessary for normal anther dehiscence and seed setting. Required for jasmonate (JA) biosynthetic genes expression and JA production in anthers. In Oryza sativa subsp. japonica (Rice), this protein is FT-interacting protein 7.